Here is a 192-residue protein sequence, read N- to C-terminus: Ion-translocating oxidoreductase complex subunit A (192 aa).

Helical transmembrane passes span 5–25 (LLLL…FLGL), 39–59 (IGMS…SYLV), 65–85 (LPFD…AVVV), 102–122 (ALGI…VALL), 134–154 (AIFG…FSAM), and 171–191 (AIAM…TGLV).

The protein belongs to the NqrDE/RnfAE family. The complex is composed of six subunits: RnfA, RnfB, RnfC, RnfD, RnfE and RnfG.

It is found in the cell inner membrane. In terms of biological role, part of a membrane-bound complex that couples electron transfer with translocation of ions across the membrane. This is Ion-translocating oxidoreductase complex subunit A from Shewanella baltica (strain OS223).